Consider the following 501-residue polypeptide: Glutamate--tRNA ligase (501 aa).

A 'HIGH' region motif is present at residues 11-21; it reads PSPTGALHIGG. The 'KMSKS' region signature appears at 260–264; it reads KLSKR. Position 263 (Lys263) interacts with ATP.

The protein belongs to the class-I aminoacyl-tRNA synthetase family. Glutamate--tRNA ligase type 1 subfamily. Monomer.

It is found in the cytoplasm. The catalysed reaction is tRNA(Glu) + L-glutamate + ATP = L-glutamyl-tRNA(Glu) + AMP + diphosphate. Functionally, catalyzes the attachment of glutamate to tRNA(Glu) in a two-step reaction: glutamate is first activated by ATP to form Glu-AMP and then transferred to the acceptor end of tRNA(Glu). The polypeptide is Glutamate--tRNA ligase (Flavobacterium psychrophilum (strain ATCC 49511 / DSM 21280 / CIP 103535 / JIP02/86)).